The chain runs to 167 residues: SsrA-binding protein (167 aa).

The tract at residues His144–Gln167 is disordered. Over residues Lys146–Arg160 the composition is skewed to basic and acidic residues.

Belongs to the SmpB family.

The protein resides in the cytoplasm. Functionally, required for rescue of stalled ribosomes mediated by trans-translation. Binds to transfer-messenger RNA (tmRNA), required for stable association of tmRNA with ribosomes. tmRNA and SmpB together mimic tRNA shape, replacing the anticodon stem-loop with SmpB. tmRNA is encoded by the ssrA gene; the 2 termini fold to resemble tRNA(Ala) and it encodes a 'tag peptide', a short internal open reading frame. During trans-translation Ala-aminoacylated tmRNA acts like a tRNA, entering the A-site of stalled ribosomes, displacing the stalled mRNA. The ribosome then switches to translate the ORF on the tmRNA; the nascent peptide is terminated with the 'tag peptide' encoded by the tmRNA and targeted for degradation. The ribosome is freed to recommence translation, which seems to be the essential function of trans-translation. The sequence is that of SsrA-binding protein from Synechococcus sp. (strain CC9902).